The primary structure comprises 347 residues: Heat-inducible transcription repressor HrcA (347 aa).

It belongs to the HrcA family.

Functionally, negative regulator of class I heat shock genes (grpE-dnaK-dnaJ and groELS operons). Prevents heat-shock induction of these operons. The sequence is that of Heat-inducible transcription repressor HrcA from Mycobacterium sp. (strain JLS).